Consider the following 100-residue polypeptide: Secreted protein of Ly-6 domain 1 (100 aa).

Positions 1-22 are cleaved as a signal peptide; the sequence is MAKCLLLLLLVVLSSLLGLPQA. The UPAR/Ly6 domain occupies 23–100; that stretch reads LECFQCNRVN…CHDSPLCNKF (78 aa). Intrachain disulfides connect Cys-25-Cys-52, Cys-28-Cys-37, Cys-44-Cys-70, Cys-74-Cys-90, and Cys-91-Cys-97. Residue Asn-60 is glycosylated (N-linked (GlcNAc...) asparagine).

In terms of processing, glycosylated. As to expression, expressed in placenta, where it is detected in both fetal tissues (cotyledon and intercotyledon) and maternal tissues (caruncle and intercaruncular endometrium) (at protein level). Expressed in the mesenchyme area of villi in the cotyledon (at protein level). In endometrium, expressed in the luminal epithelium and weakly in the subluminal stroma (at protein level). Detected in trophoblast mononucleate cells (TMCs) (at protein level). Also detected in trophoblast binucleate cells (BNCs). Overall, expression is strongest in fetal tissue and lower in maternal tissue. Not detected in other tissues tested.

The protein resides in the secreted. Functionally, binds specifically to type I collagen. This chain is Secreted protein of Ly-6 domain 1, found in Bos taurus (Bovine).